Consider the following 547-residue polypeptide: Cilia- and flagella- associated protein 210 (547 aa).

The stretch at K184–K254 forms a coiled coil. The tract at residues K210–I237 is disordered.

As to quaternary structure, microtubule inner protein component of sperm flagellar doublet microtubules. Expressed in trachea multiciliated cells.

It is found in the cytoplasm. Its subcellular location is the cytoskeleton. It localises to the cilium axoneme. The protein resides in the flagellum axoneme. Functionally, microtubule inner protein (MIP) part of the dynein-decorated doublet microtubules (DMTs) in cilia axoneme, which is required for motile cilia beating. The polypeptide is Cilia- and flagella- associated protein 210 (CFAP210) (Bos taurus (Bovine)).